A 134-amino-acid polypeptide reads, in one-letter code: Ribosome-binding factor A (134 aa).

Belongs to the RbfA family. In terms of assembly, monomer. Binds 30S ribosomal subunits, but not 50S ribosomal subunits or 70S ribosomes.

The protein resides in the cytoplasm. Its function is as follows. One of several proteins that assist in the late maturation steps of the functional core of the 30S ribosomal subunit. Associates with free 30S ribosomal subunits (but not with 30S subunits that are part of 70S ribosomes or polysomes). Required for efficient processing of 16S rRNA. May interact with the 5'-terminal helix region of 16S rRNA. The protein is Ribosome-binding factor A of Sinorhizobium medicae (strain WSM419) (Ensifer medicae).